Here is a 335-residue protein sequence, read N- to C-terminus: Ubiquinone biosynthesis protein COQ4, mitochondrial (335 aa).

The N-terminal 10 residues, 1–10 (MLRLSLLRST), are a transit peptide targeting the mitochondrion. Residues histidine 210, aspartate 211, histidine 214, and glutamate 226 each contribute to the Zn(2+) site.

Belongs to the COQ4 family. As to quaternary structure, component of a multi-subunit COQ enzyme complex, composed of at least COQ3, COQ4, COQ5, COQ6, COQ7 and COQ9. Interacts with COQ3. Zn(2+) is required as a cofactor.

The protein resides in the mitochondrion inner membrane. It carries out the reaction 4-hydroxy-3-methoxy-5-(all-trans-hexaprenyl)benzoate + H(+) = 2-methoxy-6-(all-trans-hexaprenyl)phenol + CO2. Its pathway is cofactor biosynthesis; ubiquinone biosynthesis. Lyase that catalyzes the C1-decarboxylation of 4-hydroxy-3-methoxy-5-(all-trans-hexaprenyl)benzoic acid into 2-methoxy-6-(all-trans-hexaprenyl)phenol during ubiquinone biosynthesis. This chain is Ubiquinone biosynthesis protein COQ4, mitochondrial, found in Saccharomyces cerevisiae (strain RM11-1a) (Baker's yeast).